Consider the following 375-residue polypeptide: MVEIGMGRTARRTYELEDVTIVPSRRTRSSKDVSTAWQLDAYRFEIPVIAHPTDALVSPEFAIEMGRLGGLGVLNGEGLIGRHADVEEKIAQVVEVAAKEPEPSAAIRLLQQLHAAPLDPDLLGAAVARIREAGVTTAVRVSPQNAQALTPTLVAAGIDLLVIQGTIISAERVASDGEPLNLKTFISELDVPVVAGGVLDHRTALHLMRTGAAGVIVGYGSTSGVTTSDEVLGISVPMATAIADAAAARREYLDETGGRYVHVLADGDIHSSGDLAKAIACGADAVVLGTPLATSAEALGNGWFWPAAAAHPSLPRGALLQVALGERPSLEQVLTGPSDDPFGSLNLVGGLRRSMAKAGYCDLKEFQKVGLTVGS.

K99 is covalently cross-linked (Isoglutamyl lysine isopeptide (Lys-Gln) (interchain with Q-Cter in protein Pup)).

The protein belongs to the IMPDH/GMPR family.

This is an uncharacterized protein from Mycolicibacterium smegmatis (strain ATCC 700084 / mc(2)155) (Mycobacterium smegmatis).